The following is a 209-amino-acid chain: SAGA-associated factor 11 homolog 1 (209 aa).

The segment at 1 to 36 (MSRTIVVKNPRTSGKDEDKAQIPSQDELPSGSSGAK) is disordered. Residues 120–141 (CCCPNCERMVAAVRFAPHLQTC) form an SGF11-type zinc finger. The segment covering 156-166 (LTVSSRSSSTS) has biased composition (low complexity). Residues 156 to 209 (LTVSSRSSSTSTGGGQANEKSTDDEDWSLDSRPGKSTKNSRNKGSKKNQKNKLK) form a disordered region. Residues 193–209 (KNSRNKGSKKNQKNKLK) show a composition bias toward basic residues.

Belongs to the SGF11 family. In terms of assembly, component of some SAGA transcription coactivator-HAT complexes, at least composed of Ada2b, not/nonstop, Pcaf/Gcn5, Sgf11 and Spt3. Within the SAGA complex, Sgf11, e(y)2, and not/nonstop form an additional subcomplex of SAGA called the DUB module (deubiquitination module). Interacts directly with not/nonstop. Interacts with the AMEX complex component xmas-2. Interacts with Cbp80; important for promoter recruitment of Sgf11 that is not associated with the DUB module.

Its subcellular location is the nucleus. The protein resides in the nucleoplasm. It localises to the cytoplasm. In terms of biological role, component of the transcription regulatory histone acetylation (HAT) complex SAGA, a multiprotein complex that activates transcription by remodeling chromatin and mediating histone acetylation and deubiquitination. Within the SAGA complex, participates in a subcomplex that specifically deubiquitinates histone H2B. The SAGA complex is recruited to specific gene promoters by activators, where it is required for transcription. Required for nuclear receptor-mediated transactivation. Binds independently on SAGA to promoters in an RNA-dependent manner. Binds to mRNA and is essential for total mRNA export from the nucleus. Required to counteract heterochromatin silencing. Controls the development of neuronal connectivity in visual system by being required for accurate axon targeting in the optic lobe. Required for expression of ecdysone-induced genes such as br/broad. In Drosophila willistoni (Fruit fly), this protein is SAGA-associated factor 11 homolog 1.